The chain runs to 263 residues: 3-methyl-2-oxobutanoate hydroxymethyltransferase (263 aa).

The Mg(2+) site is built by D43 and D82. 3-methyl-2-oxobutanoate contacts are provided by residues 43–44 (DS), D82, and K111. A Mg(2+)-binding site is contributed by E113. E180 (proton acceptor) is an active-site residue.

It belongs to the PanB family. In terms of assembly, homodecamer; pentamer of dimers. It depends on Mg(2+) as a cofactor.

The protein localises to the cytoplasm. It catalyses the reaction 3-methyl-2-oxobutanoate + (6R)-5,10-methylene-5,6,7,8-tetrahydrofolate + H2O = 2-dehydropantoate + (6S)-5,6,7,8-tetrahydrofolate. It functions in the pathway cofactor biosynthesis; (R)-pantothenate biosynthesis; (R)-pantoate from 3-methyl-2-oxobutanoate: step 1/2. Catalyzes the reversible reaction in which hydroxymethyl group from 5,10-methylenetetrahydrofolate is transferred onto alpha-ketoisovalerate to form ketopantoate. The protein is 3-methyl-2-oxobutanoate hydroxymethyltransferase of Bdellovibrio bacteriovorus (strain ATCC 15356 / DSM 50701 / NCIMB 9529 / HD100).